Reading from the N-terminus, the 764-residue chain is Probable 5-methyltetrahydropteroyltriglutamate--homocysteine methyltransferase (764 aa).

Lys-19 and Asn-126 together coordinate 5-methyltetrahydropteroyltri-L-glutamate. Ser-182 is subject to Phosphoserine. At Thr-441 the chain carries Phosphothreonine. Residues 442–444 (IGS) and Glu-495 each bind L-homocysteine. Residues 442–444 (IGS) and Glu-495 each bind L-methionine. 5-methyltetrahydropteroyltri-L-glutamate contacts are provided by residues Asp-500, Tyr-523, 526-527 (RC), and Trp-572. Residue Asp-610 coordinates L-homocysteine. Asp-610 serves as a coordination point for L-methionine. Zn(2+) contacts are provided by His-652, Cys-654, and Glu-676. His-703 functions as the Proton donor in the catalytic mechanism. Cys-735 contributes to the Zn(2+) binding site.

The protein belongs to the vitamin-B12 independent methionine synthase family. It depends on Zn(2+) as a cofactor.

The protein resides in the nucleus. Its subcellular location is the cytoplasm. It catalyses the reaction 5-methyltetrahydropteroyltri-L-glutamate + L-homocysteine = tetrahydropteroyltri-L-glutamate + L-methionine. It functions in the pathway amino-acid biosynthesis; L-methionine biosynthesis via de novo pathway; L-methionine from L-homocysteine (MetE route): step 1/1. Catalyzes the transfer of a methyl group from 5-methyltetrahydrofolate to homocysteine resulting in methionine formation. The sequence is that of Probable 5-methyltetrahydropteroyltriglutamate--homocysteine methyltransferase (met26) from Schizosaccharomyces pombe (strain 972 / ATCC 24843) (Fission yeast).